The chain runs to 190 residues: Transcription factor E (190 aa).

The region spanning 4–87 (KNKALLEIAK…YWHLETKRLP (84 aa)) is the HTH TFE/IIEalpha-type domain. The disordered stretch occupies residues 170–190 (PSPKKEKKKTRAKAKRKTRKK). The segment covering 174 to 190 (KEKKKTRAKAKRKTRKK) has biased composition (basic residues).

This sequence belongs to the TFE family. Monomer. Interaction with RNA polymerase subunits RpoF and RpoE is necessary for Tfe stimulatory transcription activity. Able to interact with Tbp and RNA polymerase in the absence of DNA promoter. Interacts both with the preinitiation and elongation complexes.

Its function is as follows. Transcription factor that plays a role in the activation of archaeal genes transcribed by RNA polymerase. Facilitates transcription initiation by enhancing TATA-box recognition by TATA-box-binding protein (Tbp), and transcription factor B (Tfb) and RNA polymerase recruitment. Not absolutely required for transcription in vitro, but particularly important in cases where Tbp or Tfb function is not optimal. It dynamically alters the nucleic acid-binding properties of RNA polymerases by stabilizing the initiation complex and destabilizing elongation complexes. Seems to translocate with the RNA polymerase following initiation and acts by binding to the non template strand of the transcription bubble in elongation complexes. This Pyrococcus abyssi (strain GE5 / Orsay) protein is Transcription factor E.